Here is a 140-residue protein sequence, read N- to C-terminus: ATP synthase epsilon chain (140 aa).

The protein belongs to the ATPase epsilon chain family. In terms of assembly, F-type ATPases have 2 components, CF(1) - the catalytic core - and CF(0) - the membrane proton channel. CF(1) has five subunits: alpha(3), beta(3), gamma(1), delta(1), epsilon(1). CF(0) has three main subunits: a, b and c.

The protein localises to the cell inner membrane. Functionally, produces ATP from ADP in the presence of a proton gradient across the membrane. This is ATP synthase epsilon chain from Janthinobacterium sp. (strain Marseille) (Minibacterium massiliensis).